Consider the following 316-residue polypeptide: Transcription initiation factor IIB (316 aa).

The segment at 11-42 adopts a TFIIB-type zinc-finger fold; the sequence is PRVTCPNHPDAILVEDYRAGDMICPECGLVVG. Zn(2+)-binding residues include C15, H18, C34, and C37. Phosphoserine occurs at positions 70, 76, and 92. Repeat copies occupy residues 124 to 200 and 218 to 294. DNA contacts are provided by K152, R154, K189, and K196. The interval 189 to 193 is core promoter DNA-binding; the sequence is KEIGR. K238 bears the N6-acetyllysine; by autocatalysis mark. The necessary for TATA box-bound TBP complex formation stretch occupies residues 244–316; sequence LVPGRSPISV…DTPVDKLPQL (73 aa). R248 is a DNA binding site. The interval 249–252 is core promoter DNA-binding; it reads SPIS. The DNA site is built by K272, A281, T284, R286, and R290. Residues 283–286 form a core promoter DNA-binding region; that stretch reads VTIR.

Belongs to the TFIIB family. As to quaternary structure, found in a ternary complex with TATA box-bound TBP. Part of a TFIID-containing RNA polymerase II pre-initiation complex (PIC) that is composed of TBP and at least GTF2A1, GTF2A2, GTF2E1, GTF2E2, GTF2F1, GTF2H2, GTF2H3, GTF2H4, GTF2H5, GTF2B, TCEA1, ERCC2, ERCC3, TAF1, TAF2, TAF3, TAF4, TAF5, TAF6, TAF7, TAF8, TAF9, TAF10, TAF11, TAF12 and TAF13. Associates with TFIID-TFIIA (DA complex) to form TFIID-TFIIA-TFIIB (DAB complex), which is then recognized by RNA polymerase II (Pol II). Found in a RNA polymerase II initiation complex. Interacts (via C-terminus) with TBP; this interaction with TATA box-bound TBP guides Pol II into the PIC. Interacts (via N-terminus) with Pol II. Interacts (via C-terminus) with SSU72; this interaction is inhibited by SYMPK. Interacts with NR2F1; this interaction is direct. Interacts with PGR. Interacts with ESR1. Interacts with GTF2F1 (via C-terminus and preferentially via acetylated form); this interaction prevents binding of GTF2B to GTF2F2. Interacts with GTF2F2 (via N-terminus); this interaction is inhibited in presence of GTF2F1. Interacts with the transcription elongation factor TCEA2. Interacts with HSF1 (via transactivation domain). Interacts with GPBP1. In terms of processing, acetylated. Autoacetylated; autoacetylation at Lys-238 stimulates transcription activation.

Its subcellular location is the nucleus. The protein resides in the chromosome. It catalyses the reaction L-lysyl-[protein] + acetyl-CoA = N(6)-acetyl-L-lysyl-[protein] + CoA + H(+). Its function is as follows. General transcription factor that plays a role in transcription initiation by RNA polymerase II (Pol II). Involved in the pre-initiation complex (PIC) formation and Pol II recruitment at promoter DNA. Together with the TATA box-bound TBP forms the core initiation complex and provides a bridge between TBP and the Pol II-TFIIF complex. Released from the PIC early following the onset of transcription during the initiation and elongation transition and reassociates with TBP during the next transcription cycle. Associates with chromatin to core promoter-specific regions. Binds to two distinct DNA core promoter consensus sequence elements in a TBP-independent manner; these IIB-recognition elements (BREs) are localized immediately upstream (BREu), 5'-[GC][GC][GA]CGCC-3', and downstream (BREd), 5'-[GA]T[TGA][TG][GT][TG][TG]-3', of the TATA box element. Modulates transcription start site selection. Also exhibits autoacetyltransferase activity that contributes to the activated transcription. This is Transcription initiation factor IIB from Mus musculus (Mouse).